Consider the following 973-residue polypeptide: Serine/threonine-protein kinase atg1 (973 aa).

Residues 23–328 enclose the Protein kinase domain; the sequence is YTRLDEIGRG…FPDFFQNGVI (306 aa). ATP is bound by residues 29 to 37 and Lys-52; that span reads IGRGSFATV. Catalysis depends on Asp-166, which acts as the Proton acceptor. 4 disordered regions span residues 338–446, 460–482, 523–587, and 949–973; these read DDLP…PGRQ, RQKG…DKLR, GNIS…QSPT, and PTPS…TPPK. Residues 387 to 407 show a composition bias toward polar residues; it reads GLTQRPPSQNQRFGTPQTTTP. The span at 523-537 shows a compositional bias: polar residues; that stretch reads GNISRGAQTGALSRR. The segment covering 566–582 has biased composition (basic and acidic residues); it reads SRADSMHNRQGSYERRY. Positions 951–965 are enriched in polar residues; the sequence is PSANVPSKMASSNPV.

The protein belongs to the protein kinase superfamily. Ser/Thr protein kinase family. APG1/unc-51/ULK1 subfamily. Homodimer. Forms a ternary complex with ATG13 and ATG17.

It is found in the cytoplasm. It localises to the preautophagosomal structure membrane. The catalysed reaction is L-seryl-[protein] + ATP = O-phospho-L-seryl-[protein] + ADP + H(+). It carries out the reaction L-threonyl-[protein] + ATP = O-phospho-L-threonyl-[protein] + ADP + H(+). Functionally, serine/threonine protein kinase involved in the cytoplasm to vacuole transport (Cvt) and found to be essential in autophagy, where it is required for the formation of autophagosomes. Involved in the clearance of protein aggregates which cannot be efficiently cleared by the proteasome. Required for selective autophagic degradation of the nucleus (nucleophagy) as well as for mitophagy which contributes to regulate mitochondrial quantity and quality by eliminating the mitochondria to a basal level to fulfill cellular energy requirements and preventing excess ROS production. Also involved in endoplasmic reticulum-specific autophagic process, in selective removal of ER-associated degradation (ERAD) substrates. Plays a key role in ATG9 and ATG23 cycling through the pre-autophagosomal structure and is necessary to promote ATG18 binding to ATG9 through phosphorylation of ATG9. Catalyzes phosphorylation of ATG4, decreasing the interaction between ATG4 and ATG8 and impairing deconjugation of PE-conjugated forms of ATG8. This Aspergillus fumigatus (strain ATCC MYA-4609 / CBS 101355 / FGSC A1100 / Af293) (Neosartorya fumigata) protein is Serine/threonine-protein kinase atg1.